We begin with the raw amino-acid sequence, 2281 residues long: Retinal-specific phospholipid-transporting ATPase ABCA4 (2281 aa).

The Cytoplasmic segment spans residues 1–24; the sequence is MGFARQIKLLLWKNWTLRKRQKIR. A helical membrane pass occupies residues 25–45; the sequence is FVVELVWPLSLFLVLIWLRNV. Over 46 to 646 the chain is Extracellular; it reads NPLYSKHECH…MPYPCFVDDS (601 aa). 2 cysteine pairs are disulfide-bonded: Cys54/Cys81 and Cys75/Cys324. An N-linked (GlcNAc...) asparagine glycan is attached at Asn98. Residues Ser336 and Asn338 each contribute to the Mg(2+) site. Cys370 and Cys519 are joined by a disulfide. Residues Asn415 and Asn504 are each glycosylated (N-linked (Hex...) asparagine). Positions 587 and 653 each coordinate an N-all-trans-retinylidenephosphatidylethanolamine. Cystine bridges form between Cys641/Cys1488, Cys1442/Cys1453, and Cys1486/Cys1500. The helical transmembrane segment at 647-667 threads the bilayer; sequence FMIILNRCFPIFMVLAWIYSV. The Cytoplasmic segment spans residues 668–699; sequence SMTVKSIVLEKELRLKETLKNQGVSNRVIWCT. The helical transmembrane segment at 700–720 threads the bilayer; sequence WFLDSFSIMSMSICLLTIFIM. The Extracellular segment spans residues 721 to 730; the sequence is HGRILHYSNP. The helical transmembrane segment at 731 to 751 threads the bilayer; the sequence is FILFLFLLAFSIATIMQCFLL. Residues 752–759 are Cytoplasmic-facing; it reads STFFSRAS. The chain crosses the membrane as a helical span at residues 760–780; sequence LAAACSGVIYFTLYLPHILCF. At 781–835 the chain is on the extracellular side; sequence AWQDRITADMKMAVSLLSPVAFGFGTEYLARFEEQGVGLQWSNIGNSPMEGDEFS. Residues 836–856 form a helical membrane-spanning segment; that stretch reads FLMSMKMMLLDAALYGLLAWY. Residues 857 to 1374 are Cytoplasmic-facing; it reads LDQVFPGDYG…IRSHKDFLAQ (518 aa). Thr901 bears the Phosphothreonine mark. The region spanning 929–1160 is the ABC transporter 1 domain; the sequence is VCVKNLVKIF…FGTGFYLTLV (232 aa). 3 residues coordinate ATP: Phe938, Gly966, and Lys969. Position 970 (Thr970) interacts with Mg(2+). ATP is bound by residues Thr971, Gln1010, Lys1054, Gly1064, Gly1065, and His1118. At Ser1185 the chain carries Phosphoserine. The disordered stretch occupies residues 1295-1340; the sequence is ENINLRHPCSGPSEKAGQTPQGSSSHPREPAAHPEGQPPPEREGHS. Residues 1310 to 1319 show a composition bias toward polar residues; that stretch reads AGQTPQGSSS. The residue at position 1313 (Thr1313) is a Phosphothreonine. Phosphoserine occurs at positions 1317 and 1319. A helical membrane pass occupies residues 1375 to 1395; that stretch reads IVLPATFVFLALMLSLIIPPF. Residues 1396–1679 are Extracellular-facing; sequence GEYPALTLHP…TVLTTSVDAV (284 aa). The N-linked (Hex...) asparagine glycan is linked to Asn1455. The N-linked (Hex...) asparagine glycan is linked to Asn1527. A glycan (N-linked (GlcNAc...) asparagine) is linked at Asn1586. The N-linked (Hex...) asparagine glycan is linked to Asn1660. The chain crosses the membrane as a helical span at residues 1680–1700; the sequence is VAICVIFAMSFVPASFVLYLI. Residues 1701-1725 lie on the Cytoplasmic side of the membrane; it reads QERVNKAKHLQFVSGVSPTTYWLTN. The helical transmembrane segment at 1726-1746 threads the bilayer; that stretch reads FLWDIMNYTVSAALVVGIFIG. The Extracellular segment spans residues 1747 to 1757; it reads FQKKAYTSSEN. A helical membrane pass occupies residues 1758-1778; it reads LPALVALLMLYGWAVIPMMYP. The Cytoplasmic portion of the chain corresponds to 1779-1790; it reads ASFLFDIPSTAY. A helical transmembrane segment spans residues 1791–1811; it reads VALSCANLFIGINSSAITFVL. Residues 1812–1829 are Extracellular-facing; that stretch reads ELFENNRTLLRINAMLRK. N-linked (GlcNAc...) asparagine glycosylation occurs at Asn1817. Residues 1830-1850 form a helical membrane-spanning segment; that stretch reads LLIIFPHFCLGRGLIDLALSQ. The Cytoplasmic portion of the chain corresponds to 1851–1879; sequence AVTDVYARFGEEHSSNPFQWDLIGKNLAA. A helical membrane pass occupies residues 1880-1900; sequence MAVEGVVYFLLTLLIQYQFFF. Residues 1901–2281 lie on the Extracellular side of the membrane; the sequence is SRWTTEPAKE…VDKGNSAPQG (381 aa). N-linked (GlcNAc...) asparagine glycosylation occurs at Asn1931. An ABC transporter 2 domain is found at 1936–2168; it reads LRLNELTKVY…FGDGYIVTMK (233 aa). 5 residues coordinate ATP: Asn1972, Gly1973, Lys1976, Thr1977, and Thr1978. Thr1977 contacts Mg(2+). N-linked (GlcNAc...) asparagine glycans are attached at residues Asn2004 and Asn2050. Gly2071 provides a ligand contact to ATP. The tract at residues 2242–2247 is essential for ATP binding and ATPase activity; the sequence is VFVNFA. A glycan (N-linked (GlcNAc...) asparagine) is linked at Asn2251. The disordered stretch occupies residues 2262–2281; sequence AAGASRQAKEVDKGNSAPQG.

Post-translationally, N-glycosylated. Proteolytic cleavage by trypsin leads to a 120-kDa N-terminal fragment and a 115-kDa C-terminal fragment that are linked through disulfide bonds. In terms of processing, phosphorylation is independent of light exposure and modulates ATPase activity. As to expression, expressed in retina namely in the periphery and incisures of the rod outer segments (ROS).

The protein localises to the membrane. Its subcellular location is the cell projection. It is found in the cilium. It localises to the photoreceptor outer segment. The protein resides in the cytoplasmic vesicle. The protein localises to the endoplasmic reticulum. The catalysed reaction is ATP + H2O + phospholipidSide 1 = ADP + phosphate + phospholipidSide 2.. It carries out the reaction an N-all-trans-retinylidenephosphatidylethanolamine(out) + ATP + H2O = an N-all-trans-retinylidenephosphatidylethanolamine(in) + ADP + phosphate + H(+). The enzyme catalyses a 1,2-diacyl-sn-glycero-3-phosphoethanolamine(out) + ATP + H2O = a 1,2-diacyl-sn-glycero-3-phosphoethanolamine(in) + ADP + phosphate + H(+). It catalyses the reaction N-11-cis-retinylidenephosphatidylethanolamine(out) + ATP + H2O = N-11-cis-retinylidenephosphatidylethanolamine(in) + ADP + phosphate + H(+). The catalysed reaction is ATP + H2O = ADP + phosphate + H(+). Its activity is regulated as follows. All-trans-retinal transport activity is reduced by EDTA chelation of Mg2+. All-trans-retinal transport activity is inhibited by N-ethylmaleimide (NEM). Phosphatidylethanolamine transport is strongly inhibited by beryllium fluoride and NEM. Functionally, flippase that catalyzes in an ATP-dependent manner the transport of retinal-phosphatidylethanolamine conjugates like the 11-cis and all-trans isomers of N-retinylidene-phosphatidylethanolamine from the lumen to the cytoplasmic leaflet of photoreceptor outer segment disk membranes, where N-cis-retinylidene-phosphatidylethanolamine (N-cis-R-PE) is then isomerized to its all-trans isomer (N-trans-R-PE) and reduced by RDH8 to produce all-trans-retinol (all-trans-rol) and therefore prevents the accumulation of excess of 11-cis-retinal and its schiff-base conjugate and the formation of toxic bisretinoid. Displays both ATPase and GTPase activity that is strongly influenced by the lipid environment and the presence of retinoid compounds. Binds the unprotonated form of N-retinylidene-phosphatidylethanolamine with high affinity in the absence of ATP and ATP binding and hydrolysis induce a protein conformational change that causes the dissociation of N-retinylidene-phosphatidylethanolamine. In Bos taurus (Bovine), this protein is Retinal-specific phospholipid-transporting ATPase ABCA4.